Consider the following 330-residue polypeptide: 2-oxoisovalerate dehydrogenase subunit alpha (330 aa).

Residues Phe44, Tyr73, 107-110, and Ser123 contribute to the substrate site; that span reads MPGH. 72–74 lines the thiamine diphosphate pocket; it reads YYR. Residues 123 to 125, 153 to 159, 183 to 187, and His252 contribute to the thiamine diphosphate site; these read SPV, GEGSSNQ, and NKYAI. Residues Glu154, Asn183, and Tyr185 each coordinate Mg(2+). A disordered region spans residues 249–272; that stretch reads LTPHSSDDDDSSYRGREEVEEAKK. Residues 259-272 show a composition bias toward basic and acidic residues; it reads SSYRGREEVEEAKK.

Belongs to the BCKDHA family. In terms of assembly, heterotetramer of two alpha and two beta chains. Directly associated with ODBB in the E1 complex. Thiamine diphosphate serves as cofactor.

It carries out the reaction N(6)-[(R)-lipoyl]-L-lysyl-[protein] + 3-methyl-2-oxobutanoate + H(+) = N(6)-[(R)-S(8)-2-methylpropanoyldihydrolipoyl]-L-lysyl-[protein] + CO2. The branched-chain alpha-keto dehydrogenase complex catalyzes the overall conversion of alpha-keto acids to acyl-CoA and CO(2). It contains multiple copies of three enzymatic components: branched-chain alpha-keto acid decarboxylase (E1), lipoamide acyltransferase (E2) and lipoamide dehydrogenase (E3). The chain is 2-oxoisovalerate dehydrogenase subunit alpha (bfmBAA) from Bacillus subtilis (strain 168).